A 439-amino-acid chain; its full sequence is Tubulin beta chain (439 aa).

Residues Gln-11, Glu-69, Ser-138, Gly-142, Thr-143, Gly-144, Asn-204, and Asn-226 each coordinate GTP. Glu-69 serves as a coordination point for Mg(2+).

The protein belongs to the tubulin family. In terms of assembly, dimer of alpha and beta chains. A typical microtubule is a hollow water-filled tube with an outer diameter of 25 nm and an inner diameter of 15 nM. Alpha-beta heterodimers associate head-to-tail to form protofilaments running lengthwise along the microtubule wall with the beta-tubulin subunit facing the microtubule plus end conferring a structural polarity. Microtubules usually have 13 protofilaments but different protofilament numbers can be found in some organisms and specialized cells. It depends on Mg(2+) as a cofactor.

It localises to the cytoplasm. Its subcellular location is the cytoskeleton. Functionally, tubulin is the major constituent of microtubules, a cylinder consisting of laterally associated linear protofilaments composed of alpha- and beta-tubulin heterodimers. Microtubules grow by the addition of GTP-tubulin dimers to the microtubule end, where a stabilizing cap forms. Below the cap, tubulin dimers are in GDP-bound state, owing to GTPase activity of alpha-tubulin. The sequence is that of Tubulin beta chain (TUB2) from Encephalitozoon intestinalis (Microsporidian parasite).